Reading from the N-terminus, the 365-residue chain is UDP-N-acetylglucosamine--N-acetylmuramyl-(pentapeptide) pyrophosphoryl-undecaprenol N-acetylglucosamine transferase (365 aa).

Residues 10–12 (TGG), Asn128, Arg170, Ser199, Ile250, and Gln295 contribute to the UDP-N-acetyl-alpha-D-glucosamine site.

It belongs to the glycosyltransferase 28 family. MurG subfamily.

It localises to the cell inner membrane. It catalyses the reaction di-trans,octa-cis-undecaprenyl diphospho-N-acetyl-alpha-D-muramoyl-L-alanyl-D-glutamyl-meso-2,6-diaminopimeloyl-D-alanyl-D-alanine + UDP-N-acetyl-alpha-D-glucosamine = di-trans,octa-cis-undecaprenyl diphospho-[N-acetyl-alpha-D-glucosaminyl-(1-&gt;4)]-N-acetyl-alpha-D-muramoyl-L-alanyl-D-glutamyl-meso-2,6-diaminopimeloyl-D-alanyl-D-alanine + UDP + H(+). Its pathway is cell wall biogenesis; peptidoglycan biosynthesis. Cell wall formation. Catalyzes the transfer of a GlcNAc subunit on undecaprenyl-pyrophosphoryl-MurNAc-pentapeptide (lipid intermediate I) to form undecaprenyl-pyrophosphoryl-MurNAc-(pentapeptide)GlcNAc (lipid intermediate II). In Pelodictyon phaeoclathratiforme (strain DSM 5477 / BU-1), this protein is UDP-N-acetylglucosamine--N-acetylmuramyl-(pentapeptide) pyrophosphoryl-undecaprenol N-acetylglucosamine transferase.